A 384-amino-acid chain; its full sequence is Calreticulin-3 (384 aa).

The signal sequence occupies residues 1-19 (MARALVQLWAICMLRVALA). Positions 20–197 (TVYFQEEFLD…GQSIESGSIE (178 aa)) are N-domain. N-linked (GlcNAc...) asparagine glycosylation occurs at Asn42. Cys105 and Cys137 form a disulfide bridge. An alpha-D-glucoside-binding residues include Tyr109, Lys111, Tyr128, and Asp135. A run of 7 repeats spans residues 191–202 (IESGSIEYDWNL), 208–219 (ETSPAESKDWEQ), 221–230 (KDNKAQDWEK), 234–245 (DASTSKQSDWNG), 249–259 (GDWPAPMLQKP), 263–271 (DGLKPEGIH), and 273–283 (DVWLHRKMKNT). Residues 191-245 (IESGSIEYDWNLTSLKKETSPAESKDWEQTKDNKAQDWEKHFLDASTSKQSDWNG) are 4 X approximate repeats. A P-domain region spans residues 198-294 (YDWNLTSLKK…YLTQYDLSEF (97 aa)). A glycan (N-linked (GlcNAc...) asparagine) is linked at Asn201. Residues 249 to 283 (GDWPAPMLQKPPYQDGLKPEGIHKDVWLHRKMKNT) form a 3 X approximate repeats region. Positions 295–384 (ENIGAIGLEL…FNQFHRRNEL (90 aa)) are C-domain. Position 303 (Glu303) interacts with an alpha-D-glucoside. Residues 381-384 (RNEL) carry the Prevents secretion from ER motif.

It belongs to the calreticulin family. As to quaternary structure, component of an EIF2 complex at least composed of CELF1/CUGBP1, CALR, CALR3, EIF2S1, EIF2S2, HSP90B1 and HSPA5. Testis specific.

It localises to the endoplasmic reticulum lumen. Functionally, during spermatogenesis, may act as a lectin-independent chaperone for specific client proteins such as ADAM3. Required for sperm fertility. CALR3 capacity for calcium-binding may be absent or much lower than that of CALR. This is Calreticulin-3 (CALR3) from Homo sapiens (Human).